Reading from the N-terminus, the 398-residue chain is AT-rich interactive domain-containing protein 6 (398 aa).

The segment at 25–87 is disordered; it reads EPLEPENDHN…PKTEGENAKK (63 aa). Positions 106–197 constitute an ARID domain; it reads PVEQVAFLRE…ALLEYEKCLR (92 aa). A disordered region spans residues 213–236; sequence SSVEKEPSSHQGSGSGRARRDSAA. Residues 305–398 form the sHSP domain; the sequence is VGPVADWVKI…RLFIRVPFEQ (94 aa).

It belongs to the small heat shock protein (HSP20) family.

The protein localises to the nucleus. This Arabidopsis thaliana (Mouse-ear cress) protein is AT-rich interactive domain-containing protein 6 (ARID6).